The sequence spans 142 residues: Deoxyuridine 5'-triphosphate nucleotidohydrolase (142 aa).

Residues 62 to 64 (RSG), Asn-75, and 79 to 81 (TID) each bind substrate.

It belongs to the dUTPase family. Mg(2+) serves as cofactor.

It carries out the reaction dUTP + H2O = dUMP + diphosphate + H(+). It functions in the pathway pyrimidine metabolism; dUMP biosynthesis; dUMP from dCTP (dUTP route): step 2/2. In terms of biological role, this enzyme is involved in nucleotide metabolism: it produces dUMP, the immediate precursor of thymidine nucleotides and it decreases the intracellular concentration of dUTP so that uracil cannot be incorporated into DNA. The chain is Deoxyuridine 5'-triphosphate nucleotidohydrolase from Crocosphaera subtropica (strain ATCC 51142 / BH68) (Cyanothece sp. (strain ATCC 51142)).